Consider the following 365-residue polypeptide: Histidinol-phosphate aminotransferase (365 aa).

The segment at 1–22 (MSRPVPNPGILDIAPYTPGKSP) is disordered. Lys221 carries the post-translational modification N6-(pyridoxal phosphate)lysine.

Belongs to the class-II pyridoxal-phosphate-dependent aminotransferase family. Histidinol-phosphate aminotransferase subfamily. Homodimer. Pyridoxal 5'-phosphate is required as a cofactor.

The catalysed reaction is L-histidinol phosphate + 2-oxoglutarate = 3-(imidazol-4-yl)-2-oxopropyl phosphate + L-glutamate. It participates in amino-acid biosynthesis; L-histidine biosynthesis; L-histidine from 5-phospho-alpha-D-ribose 1-diphosphate: step 7/9. This Rhodopseudomonas palustris (strain BisA53) protein is Histidinol-phosphate aminotransferase.